A 1602-amino-acid chain; its full sequence is MAP kinase-activating death domain protein (1602 aa).

The 255-residue stretch at 13–267 (YLVIVGARHP…VPVSGQKRVD (255 aa)) folds into the uDENN domain. Residues 105 to 121 (PKEKAEGGAGPRGKEGA) are compositionally biased toward basic and acidic residues. The interval 105–167 (PKEKAEGGAG…GKRRAKAGNR (63 aa)) is disordered. Over residues 126-137 (ASEEAATESSES) the composition is skewed to low complexity. The segment covering 138 to 156 (GSTLQPPSADSTPDVNQSP) has biased composition (polar residues). The residue at position 155 (serine 155) is a Phosphoserine. Residues 157-166 (RGKRRAKAGN) show a composition bias toward basic residues. Residues 288–428 (RFTLVDFPLH…ESLELKKHLK (141 aa)) form the cDENN domain. In terms of domain architecture, dDENN spans 430-564 (ALASMSLNTQ…LNPSNYAFQR (135 aa)). Disordered regions lie at residues 603–635 (ALSV…SSYS) and 676–840 (QPQK…NSTE). The segment covering 614–629 (SDPTDDSGSDSMDYDD) has biased composition (acidic residues). Phosphoserine is present on residues serine 688 and serine 691. A compositionally biased stretch (polar residues) spans 688–698 (SENSQENLPLR). The span at 699-711 (SSSSTTASSSPST) shows a compositional bias: low complexity. Serine 778 is subject to Phosphoserine. The span at 789 to 803 (ESYTPRFSQHASGSR) shows a compositional bias: polar residues. A phosphoserine mark is found at serine 812, serine 817, and serine 819. A compositionally biased stretch (low complexity) spans 826-839 (RASSPNSTVSNNST). Serine 857, serine 861, serine 895, serine 900, and serine 909 each carry phosphoserine. Disordered stretches follow at residues 870-920 (KGAR…SSEN), 1030-1089 (KEPD…DTRS), and 1113-1231 (TEEK…RSSE). The segment covering 911-920 (QGRSSNSSEN) has biased composition (polar residues). Serine 1038 is modified (phosphoserine). 2 positions are modified to phosphothreonine: threonine 1040 and threonine 1045. Serine 1089 is modified (phosphoserine). Polar residues predominate over residues 1119–1134 (QISADSGVSLASASQR). The segment covering 1151 to 1162 (SSSQDSEVSNSS) has biased composition (low complexity). The span at 1191 to 1209 (SRATLSDSEIETNSATSTI) shows a compositional bias: polar residues. Threonine 1194 bears the Phosphothreonine mark. Serine 1196 and serine 1225 each carry phosphoserine. The Death domain maps to 1295–1370 (GMDQGPQEMI…GLVYSQQINE (76 aa)).

Belongs to the MADD family. As to quaternary structure, interacts (via death domain) with TNFRSF1A (via death domain). Interacts with PIDD1. Interacts with YWHAZ. Interacts (via death domain) with KIF1B; links the motor KIF1B to Rab3-carrying vesicles in anterograde synaptic vesicle transport. Interacts with KIF1A. Interacts (via uDENN domain) with RAB3A, RAB3B, RAB3C and RAB3D; the GTP-bound form of the Rab proteins is preferred for interaction. As to expression, expressed in all tissues examined with the highest expression in brain.

It localises to the cell membrane. Its subcellular location is the cytoplasm. It is found in the cell projection. The protein localises to the axon. Its function is as follows. Guanyl-nucleotide exchange factor that regulates small GTPases of the Rab family. Converts GDP-bound inactive form of RAB27A and RAB27B to the GTP-bound active forms. Converts GDP-bound inactive form of RAB3A, RAB3C and RAB3D to the GTP-bound active forms, GTPases involved in synaptic vesicle exocytosis and vesicle secretion. Plays a role in synaptic vesicle formation and in vesicle trafficking at the neuromuscular junction. Involved in up-regulating a post-docking step of synaptic exocytosis in central synapses. Probably by binding to the motor proteins KIF1B and KIF1A, mediates motor-dependent transport of GTP-RAB3A-positive vesicles to the presynaptic nerve terminals. Plays a role in TNFA-mediated activation of the MAPK pathway, including ERK1/2. May link TNFRSF1A with MAP kinase activation. May be involved in the regulation of TNFA-induced apoptosis. The sequence is that of MAP kinase-activating death domain protein from Rattus norvegicus (Rat).